Consider the following 468-residue polypeptide: F-box/LRR-repeat protein At4g14096 (468 aa).

The region spanning Arg7–Pro60 is the F-box domain. 6 LRR repeats span residues Val114–Ser136, Thr138–Ser167, Tyr169–Asp194, Ser216–Asp241, Thr292–Ser323, and Asn324–Gly349.

The polypeptide is F-box/LRR-repeat protein At4g14096 (Arabidopsis thaliana (Mouse-ear cress)).